We begin with the raw amino-acid sequence, 189 residues long: Phosphoheptose isomerase (189 aa).

In terms of domain architecture, SIS spans 34 to 189; sequence VADTLKNGKK…CQAVDEAFRG (156 aa). 49-51 contacts substrate; sequence NGG. Zn(2+) is bound by residues histidine 58 and glutamate 62. Substrate is bound by residues glutamate 62, 91–92, 117–119, serine 122, and glutamine 169; these read ND and STS. Positions 169 and 177 each coordinate Zn(2+).

Belongs to the SIS family. GmhA subfamily. As to quaternary structure, homotetramer. The cofactor is Zn(2+).

It localises to the cytoplasm. It catalyses the reaction 2 D-sedoheptulose 7-phosphate = D-glycero-alpha-D-manno-heptose 7-phosphate + D-glycero-beta-D-manno-heptose 7-phosphate. The protein operates within carbohydrate biosynthesis; D-glycero-D-manno-heptose 7-phosphate biosynthesis; D-glycero-alpha-D-manno-heptose 7-phosphate and D-glycero-beta-D-manno-heptose 7-phosphate from sedoheptulose 7-phosphate: step 1/1. Catalyzes the isomerization of sedoheptulose 7-phosphate in D-glycero-D-manno-heptose 7-phosphate. In Campylobacter concisus (strain 13826), this protein is Phosphoheptose isomerase.